Consider the following 243-residue polypeptide: tRNA (guanine-N(1)-)-methyltransferase (243 aa).

Residues G108 and 127–132 (LGDFVL) contribute to the S-adenosyl-L-methionine site.

This sequence belongs to the RNA methyltransferase TrmD family. As to quaternary structure, homodimer.

The protein localises to the cytoplasm. It carries out the reaction guanosine(37) in tRNA + S-adenosyl-L-methionine = N(1)-methylguanosine(37) in tRNA + S-adenosyl-L-homocysteine + H(+). Functionally, specifically methylates guanosine-37 in various tRNAs. In Streptococcus equi subsp. equi (strain 4047), this protein is tRNA (guanine-N(1)-)-methyltransferase.